A 507-amino-acid chain; its full sequence is Maturase K (507 aa).

The protein belongs to the intron maturase 2 family. MatK subfamily.

Its subcellular location is the plastid. The protein resides in the chloroplast. Functionally, usually encoded in the trnK tRNA gene intron. Probably assists in splicing its own and other chloroplast group II introns. In Liriodendron tulipifera (Tuliptree), this protein is Maturase K.